The sequence spans 318 residues: Beta-ketoacyl-[acyl-carrier-protein] synthase III (318 aa).

Active-site residues include C113 and H245. Positions 246 to 250 (QANIR) are ACP-binding. The active site involves N275.

Belongs to the thiolase-like superfamily. FabH family. As to quaternary structure, homodimer.

The protein localises to the cytoplasm. The catalysed reaction is malonyl-[ACP] + acetyl-CoA + H(+) = 3-oxobutanoyl-[ACP] + CO2 + CoA. It participates in lipid metabolism; fatty acid biosynthesis. Functionally, catalyzes the condensation reaction of fatty acid synthesis by the addition to an acyl acceptor of two carbons from malonyl-ACP. Catalyzes the first condensation reaction which initiates fatty acid synthesis and may therefore play a role in governing the total rate of fatty acid production. Possesses both acetoacetyl-ACP synthase and acetyl transacylase activities. Its substrate specificity determines the biosynthesis of branched-chain and/or straight-chain of fatty acids. This Wolbachia pipientis subsp. Culex pipiens (strain wPip) protein is Beta-ketoacyl-[acyl-carrier-protein] synthase III.